Here is a 125-residue protein sequence, read N- to C-terminus: uncharacterized protein (125 aa).

The Cupin type-2 domain maps to 45 to 110 (IVPVGSKTLL…IGNVPLKILC (66 aa)).

This is an uncharacterized protein from Methanocaldococcus jannaschii (strain ATCC 43067 / DSM 2661 / JAL-1 / JCM 10045 / NBRC 100440) (Methanococcus jannaschii).